Here is a 353-residue protein sequence, read N- to C-terminus: Photosystem II D2 protein (353 aa).

At Thr-2 the chain carries N-acetylthreonine. At Thr-2 the chain carries Phosphothreonine. Residues 41–61 (CAYFALGGWFTGTTFVTSWYT) form a helical membrane-spanning segment. A chlorophyll a-binding site is contributed by His-118. Residues 125–141 (GFMLRQFELARSVQLRP) traverse the membrane as a helical segment. Residues Gln-130 and Asn-143 each coordinate pheophytin a. The chain crosses the membrane as a helical span at residues 153–166 (VFVSVFLIYPLGQS). His-198 provides a ligand contact to chlorophyll a. The chain crosses the membrane as a helical span at residues 208 to 228 (AALLCAIHGATVENTLFEDGD). The a plastoquinone site is built by His-215 and Phe-262. Residue His-215 participates in Fe cation binding. His-269 serves as a coordination point for Fe cation. A helical membrane pass occupies residues 279–295 (GLWMSALGVVGLALNLR).

The protein belongs to the reaction center PufL/M/PsbA/D family. PSII is composed of 1 copy each of membrane proteins PsbA, PsbB, PsbC, PsbD, PsbE, PsbF, PsbH, PsbI, PsbJ, PsbK, PsbL, PsbM, PsbT, PsbX, PsbY, PsbZ, Psb30/Ycf12, at least 3 peripheral proteins of the oxygen-evolving complex and a large number of cofactors. It forms dimeric complexes. It depends on The D1/D2 heterodimer binds P680, chlorophylls that are the primary electron donor of PSII, and subsequent electron acceptors. It shares a non-heme iron and each subunit binds pheophytin, quinone, additional chlorophylls, carotenoids and lipids. There is also a Cl(-1) ion associated with D1 and D2, which is required for oxygen evolution. The PSII complex binds additional chlorophylls, carotenoids and specific lipids. as a cofactor.

Its subcellular location is the plastid. The protein localises to the chloroplast thylakoid membrane. The catalysed reaction is 2 a plastoquinone + 4 hnu + 2 H2O = 2 a plastoquinol + O2. In terms of biological role, photosystem II (PSII) is a light-driven water:plastoquinone oxidoreductase that uses light energy to abstract electrons from H(2)O, generating O(2) and a proton gradient subsequently used for ATP formation. It consists of a core antenna complex that captures photons, and an electron transfer chain that converts photonic excitation into a charge separation. The D1/D2 (PsbA/PsbD) reaction center heterodimer binds P680, the primary electron donor of PSII as well as several subsequent electron acceptors. D2 is needed for assembly of a stable PSII complex. This Spinacia oleracea (Spinach) protein is Photosystem II D2 protein.